The sequence spans 1365 residues: Histone-lysine N-methyltransferase NSD2 (1365 aa).

2 positions are modified to phosphothreonine: Thr110 and Thr114. A Phosphoserine modification is found at Ser121. A disordered region spans residues 149–169 (ADVSQSEENEQKSDNKTRRNR). The residue at position 172 (Ser172) is a Phosphoserine. Residues 222–286 (VGDLVWSKVS…FEKSLVAFEG (65 aa)) enclose the PWWP 1 domain. Disordered stretches follow at residues 373–455 (MVDS…RKGD), 513–567 (QSEE…DKTA), and 594–658 (CKPL…SKKS). Position 376 is a phosphoserine (Ser376). Thr422 bears the Phosphothreonine mark. The HMG box DNA-binding region spans 453 to 521 (KGDSAAQFLV…AQSEEDSGNG (69 aa)). Residues 552-567 (DKHSLRKRETITDKTA) are compositionally biased toward basic and acidic residues. Over residues 603-623 (ASATASSALGFNKSSSPSASL) the composition is skewed to polar residues. The segment covering 632 to 648 (PGDEPSESPYESADETQ) has biased composition (acidic residues). PHD-type zinc fingers lie at residues 667–713 (EYVC…CASG), 714–770 (IHSC…CHAS), and 831–875 (VSWC…CRAG). In terms of domain architecture, PWWP 2 spans 880–942 (FQDIIWVKLG…QARVFPYMEG (63 aa)). One can recognise an AWS domain in the interval 1011-1061 (SEIPKCNCKPTDENPCGSDSECLNRMLMFECHPQVCPAGEYCQNQCFTKRQ). Residues Cys1016, Cys1018, Cys1026, Cys1032, Cys1041, Cys1046, and Cys1052 each contribute to the Zn(2+) site. Residues 1063 to 1180 (PETKIIKTDG…AGTELTFNYN (118 aa)) form the SET domain. S-adenosyl-L-methionine contacts are provided by residues Trp1075, 1115–1118 (THFY), and 1141–1142 (NH). Cys1144 provides a ligand contact to Zn(2+). Asn1186 serves as a coordination point for S-adenosyl-L-methionine. The Post-SET domain maps to 1187-1203 (EKTVCRCGASNCSGFLG). Position 1191 (Cys1191) interacts with Zn(2+). Arg1192 serves as a coordination point for S-adenosyl-L-methionine. Cys1193 and Cys1198 together coordinate Zn(2+). Positions 1206–1232 (PKTSASLSSEEKGKKAKKKTRRRRAKG) are disordered. The segment covering 1219-1230 (KKAKKKTRRRRA) has biased composition (basic residues). The segment at 1239–1286 (EDECFRCGDGGQLVLCDRKFCTKAYHLSCLGLGKRPFGKWECPWHHCD) adopts a PHD-type 4; atypical zinc-finger fold. The disordered stretch occupies residues 1329-1365 (RADSSSSTKTEKPFPESLKSKGKRKKRRCWRRVTDGK). Residues 1348 to 1359 (SKGKRKKRRCWR) show a composition bias toward basic residues.

This sequence belongs to the class V-like SAM-binding methyltransferase superfamily. Histone-lysine methyltransferase family. SET2 subfamily. In terms of assembly, interacts with HDAC1. Interacts (via PHD-type zinc fingers 1, 2 and 3) with SALL1. Interacts (via PHD-type 1, 2 and 3) with SALL4. Interacts with NANOG. Interacts with OGT. Interacts (via HMG box) with NKX2-5. As to expression, during B-cell development, expressed in early B2 cell progenitors (pre- and pro-B cells) with a decrease in expression at later stages.

The protein resides in the nucleus. The protein localises to the chromosome. The enzyme catalyses L-lysyl(36)-[histone H3] + S-adenosyl-L-methionine = N(6)-methyl-L-lysyl(36)-[histone H3] + S-adenosyl-L-homocysteine + H(+). The catalysed reaction is L-lysyl(36)-[histone H3] + 2 S-adenosyl-L-methionine = N(6),N(6)-dimethyl-L-lysyl(36)-[histone H3] + 2 S-adenosyl-L-homocysteine + 2 H(+). In terms of biological role, histone methyltransferase which specifically dimethylates nucleosomal histone H3 at 'Lys-36' (H3K36me2). Also monomethylates nucleosomal histone H3 at 'Lys-36' (H3K36me) in vitro. Does not trimethylate nucleosomal histone H3 at 'Lys-36' (H3K36me3). However, specifically trimethylates histone H3 at 'Lys-36' (H3K36me3) at euchromatic regions in embryonic stem (ES) cells. By methylating histone H3 at 'Lys-36', involved in the regulation of gene transcription during various biological processes. In ES cells, associates with developmental transcription factors such as SALL1 and represses inappropriate gene transcription mediated by histone deacetylation. During heart development, associates with transcription factor NKX2-5 to repress transcription of NKX2-5 target genes. Plays an essential role in adipogenesis, by regulating expression of genes involved in pre-adipocyte differentiation. During T-cell receptor (TCR) and CD28-mediated T-cell activation, promotes the transcription of transcription factor BCL6 which is required for follicular helper T (Tfh) cell differentiation. During B-cell development, required for the generation of the B1 lineage. During B2 cell activation, may contribute to the control of isotype class switch recombination (CRS), splenic germinal center formation, and the humoral immune response. Plays a role in class switch recombination of the immunoglobulin heavy chain (IgH) locus during B-cell activation. By regulating the methylation of histone H3 at 'Lys-36' and histone H4 at 'Lys-20' at the IgH locus, involved in TP53BP1 recruitment to the IgH switch region and promotes the transcription of IgA. Histone methyltransferase which specifically dimethylates nucleosomal histone H3 at 'Lys-36' (H3K36me2). Mono-, di- and tri-methylates histone H3 at 'Lys-27' (H3K27me, H3K27me2, H3K27me3). Methylation of histone H3 at 'Lys-27' is controversial. May act as a transcription regulator that binds DNA and suppresses IL5 transcription through HDAC recruitment. The protein is Histone-lysine N-methyltransferase NSD2 (Nsd2) of Mus musculus (Mouse).